Here is a 217-residue protein sequence, read N- to C-terminus: Phosphatidylserine decarboxylase proenzyme (217 aa).

The active-site Schiff-base intermediate with substrate; via pyruvic acid is the serine 182. At serine 182 the chain carries Pyruvic acid (Ser); by autocatalysis.

It belongs to the phosphatidylserine decarboxylase family. PSD-A subfamily. As to quaternary structure, heterodimer of a large membrane-associated beta subunit and a small pyruvoyl-containing alpha subunit. Pyruvate serves as cofactor. Post-translationally, is synthesized initially as an inactive proenzyme. Formation of the active enzyme involves a self-maturation process in which the active site pyruvoyl group is generated from an internal serine residue via an autocatalytic post-translational modification. Two non-identical subunits are generated from the proenzyme in this reaction, and the pyruvate is formed at the N-terminus of the alpha chain, which is derived from the carboxyl end of the proenzyme. The post-translation cleavage follows an unusual pathway, termed non-hydrolytic serinolysis, in which the side chain hydroxyl group of the serine supplies its oxygen atom to form the C-terminus of the beta chain, while the remainder of the serine residue undergoes an oxidative deamination to produce ammonia and the pyruvoyl prosthetic group on the alpha chain.

The protein resides in the cell membrane. It carries out the reaction a 1,2-diacyl-sn-glycero-3-phospho-L-serine + H(+) = a 1,2-diacyl-sn-glycero-3-phosphoethanolamine + CO2. The protein operates within phospholipid metabolism; phosphatidylethanolamine biosynthesis; phosphatidylethanolamine from CDP-diacylglycerol: step 2/2. Its function is as follows. Catalyzes the formation of phosphatidylethanolamine (PtdEtn) from phosphatidylserine (PtdSer). The chain is Phosphatidylserine decarboxylase proenzyme from Nitratidesulfovibrio vulgaris (strain ATCC 29579 / DSM 644 / CCUG 34227 / NCIMB 8303 / VKM B-1760 / Hildenborough) (Desulfovibrio vulgaris).